We begin with the raw amino-acid sequence, 166 residues long: MEDFFSIGQIINTHGVRGELKIYPLTDDINRFDDLDSVYVDNEIKKVISVKKQPNKLILKLEGIDTLDEAVKYKNKYIKVLREDAVELKEGQYFIKDIIGCNVFDENDKDLGEVYDVISTKNNDVYCIRKEGQQDILVPALKDIVLKIEIENKKIVIKAVEEWLES.

Residues 90–163 (EGQYFIKDII…KIVIKAVEEW (74 aa)) enclose the PRC barrel domain.

It belongs to the RimM family. In terms of assembly, binds ribosomal protein uS19.

The protein localises to the cytoplasm. Functionally, an accessory protein needed during the final step in the assembly of 30S ribosomal subunit, possibly for assembly of the head region. Essential for efficient processing of 16S rRNA. May be needed both before and after RbfA during the maturation of 16S rRNA. It has affinity for free ribosomal 30S subunits but not for 70S ribosomes. The protein is Ribosome maturation factor RimM of Clostridium acetobutylicum (strain ATCC 824 / DSM 792 / JCM 1419 / IAM 19013 / LMG 5710 / NBRC 13948 / NRRL B-527 / VKM B-1787 / 2291 / W).